Consider the following 811-residue polypeptide: Phenylalanine--tRNA ligase beta subunit (811 aa).

Residues 39–151 (RTWAAGVVVG…AGLQAGQPVG (113 aa)) form the tRNA-binding domain. One can recognise a B5 domain in the interval 409-495 (EPEHSITLRL…RLYGYDNFGE (87 aa)). Mg(2+)-binding residues include Asp-473, Asp-479, Glu-482, and Glu-483. One can recognise an FDX-ACB domain in the interval 717 to 810 (SSFPASDRDL…LVERFRVTLR (94 aa)).

The protein belongs to the phenylalanyl-tRNA synthetase beta subunit family. Type 1 subfamily. In terms of assembly, tetramer of two alpha and two beta subunits. Requires Mg(2+) as cofactor.

The protein localises to the cytoplasm. The catalysed reaction is tRNA(Phe) + L-phenylalanine + ATP = L-phenylalanyl-tRNA(Phe) + AMP + diphosphate + H(+). The protein is Phenylalanine--tRNA ligase beta subunit of Synechococcus sp. (strain ATCC 27144 / PCC 6301 / SAUG 1402/1) (Anacystis nidulans).